A 286-amino-acid chain; its full sequence is MAIPKIVLFYQFTPLADPEAIKLWQHSLAESNNLTGRIIVSPHGINATVGGDIEDVKRYVRGTRGYEPFRTADIKWSDGLGNDFPRLSVKARSEIVTFGAPDELKVDENGVVGGGVHLAPKELHELVDSRGDDVVFFDGRNAFEAEIGRFRDAVVPDVATTRDFVDELDSGKYDHLKGKAVVTYCTGGVRCEVLSSLMRSRGFDEVYQLDGGIVRYGETFGDRGLWDGSLYVFDKRMNIEFSSEAKTLGVCVDCGTPTPRYRNRIDGDGRTLELLCESCSPDLEQD.

The Rhodanese domain occupies Arg-130–Leu-225. Cys-185 acts as the Cysteine persulfide intermediate in catalysis.

This sequence belongs to the TrhO family.

It catalyses the reaction uridine(34) in tRNA + AH2 + O2 = 5-hydroxyuridine(34) in tRNA + A + H2O. Catalyzes oxygen-dependent 5-hydroxyuridine (ho5U) modification at position 34 in tRNAs. In Rhodococcus erythropolis (strain PR4 / NBRC 100887), this protein is tRNA uridine(34) hydroxylase.